A 503-amino-acid polypeptide reads, in one-letter code: Probable cytosol aminopeptidase (503 aa).

2 residues coordinate Mn(2+): K270 and D275. The active site involves K282. Residues D293, D352, and E354 each coordinate Mn(2+). R356 is a catalytic residue.

Belongs to the peptidase M17 family. Requires Mn(2+) as cofactor.

The protein resides in the cytoplasm. It catalyses the reaction Release of an N-terminal amino acid, Xaa-|-Yaa-, in which Xaa is preferably Leu, but may be other amino acids including Pro although not Arg or Lys, and Yaa may be Pro. Amino acid amides and methyl esters are also readily hydrolyzed, but rates on arylamides are exceedingly low.. It carries out the reaction Release of an N-terminal amino acid, preferentially leucine, but not glutamic or aspartic acids.. In terms of biological role, presumably involved in the processing and regular turnover of intracellular proteins. Catalyzes the removal of unsubstituted N-terminal amino acids from various peptides. The protein is Probable cytosol aminopeptidase of Shigella flexneri.